The sequence spans 131 residues: Sirohydrochlorin cobaltochelatase (131 aa).

Catalysis depends on histidine 12, which acts as the Proton acceptor. 2 residues coordinate Co(2+): histidine 12 and histidine 78. Ni(2+) contacts are provided by histidine 12 and histidine 78. Residue 73–78 (LASGVH) coordinates substrate.

This sequence belongs to the CbiX family. CbiXS subfamily. Homotetramer; dimer of dimers.

It carries out the reaction Co-sirohydrochlorin + 2 H(+) = sirohydrochlorin + Co(2+). The enzyme catalyses Ni-sirohydrochlorin + 2 H(+) = sirohydrochlorin + Ni(2+). The protein operates within cofactor biosynthesis; adenosylcobalamin biosynthesis; cob(II)yrinate a,c-diamide from sirohydrochlorin (anaerobic route): step 1/10. In terms of biological role, catalyzes the insertion of Co(2+) into sirohydrochlorin as part of the anaerobic pathway to cobalamin biosynthesis. Involved in the biosynthesis of the unique nickel-containing tetrapyrrole coenzyme F430, the prosthetic group of methyl-coenzyme M reductase (MCR), which plays a key role in methanogenesis and anaerobic methane oxidation. Catalyzes the insertion of Ni(2+) into sirohydrochlorin to yield Ni-sirohydrochlorin. This chain is Sirohydrochlorin cobaltochelatase, found in Methanococcoides burtonii (strain DSM 6242 / NBRC 107633 / OCM 468 / ACE-M).